The sequence spans 162 residues: Small ribosomal subunit protein uS13 (162 aa).

The disordered stretch occupies residues 142 to 162; the sequence is RGQRTKSTGRRGSTVGVSRKK.

The protein belongs to the universal ribosomal protein uS13 family. Part of the 30S ribosomal subunit. Forms a loose heterodimer with protein S19. Forms two bridges to the 50S subunit in the 70S ribosome.

Its function is as follows. Located at the top of the head of the 30S subunit, it contacts several helices of the 16S rRNA. In the 70S ribosome it contacts the 23S rRNA (bridge B1a) and protein L5 of the 50S subunit (bridge B1b), connecting the 2 subunits; these bridges are implicated in subunit movement. The polypeptide is Small ribosomal subunit protein uS13 (Methanosarcina acetivorans (strain ATCC 35395 / DSM 2834 / JCM 12185 / C2A)).